We begin with the raw amino-acid sequence, 540 residues long: MARCRHHSGYLADDEAAHGTYVARLPKKHLLPEMRPTCKLGRVPHLPSMNRYSERQGHQQNLRRPRAFGGFLDFLTEGQVLDSLQTVVEQATECVATMKTEAGVPLVDVQDRVEVPNSRHRSRGRPSINTVHRHRARPTLCAGHPNNYPSCSSSMSDSHSSVTAGWLGSRSQDSDLGARGVGSLPPMRDKLLLEKNLKRLLRLESKGKVLNQHCSQRDSLLWDSLGSQSSSQPTREQPLSWFSGLLASTSVTPETSELGLGEQEMIFLKQELNKEIKSLLNQPTSFNLPTYCPLREPHRTLDFLSEHHLFPALQRVVSQAVDKLSHACRHNGFPLFPVTSELSPVFPGNSDLQPSSKASLPTDREARGETCYSPTSASSPKTSHRKSKDRRGSPSNAVQMATRFRLKVTPTEVSNVPIPSSQCMLKSPNSDLKLQKQTTASNHNHIPQPRHGLHLTLPAPGITVEVASCQGQLRGQVQHSLATPCHLHSHFPFPVFSPFLPLGKSFSTSPPTLCPEVSSRAGLEVLEGHLKGRGCFTHHF.

The stretch at 79-102 (QVLDSLQTVVEQATECVATMKTEA) forms a coiled coil. The interval 347-400 (PGNSDLQPSSKASLPTDREARGETCYSPTSASSPKTSHRKSKDRRGSPSNAVQM) is disordered. Polar residues-rich tracts occupy residues 350-359 (SDLQPSSKAS) and 372-381 (YSPTSASSPK). S393 carries the post-translational modification Phosphoserine.

The protein localises to the cytoplasm. Its subcellular location is the cytoskeleton. It is found in the microtubule organizing center. It localises to the centrosome. This chain is Coiled-coil domain-containing protein 116 (Ccdc116), found in Rattus norvegicus (Rat).